The chain runs to 111 residues: Entry-fusion complex protein OPG086 (111 aa).

Residues 1–21 form a helical; Signal-anchor membrane-spanning segment; sequence MASLLYLILFLLFVCISYYFT. At 22–111 the chain is on the virion surface side; sequence YYPTNKLQAA…TLLPILLLSK (90 aa).

Belongs to the orthopoxvirus OPG086 family. As to quaternary structure, interacts with OPG099/L5. Component of the entry fusion complex (EFC) composed of OPG053, OPG076, OPG086, OPG094, OPG095, OPG099, OPG107, OPG143, OPG104, OPG147 and OPG155. Except for OPG095 and OPG053, each of the EFC proteins is required for assembly or stability of the complex. Post-translationally, unglycosylated because produced in viral factories instead of the classic ER -Golgi route.

The protein resides in the virion membrane. In terms of biological role, component of the entry fusion complex (EFC), which consists of 11 proteins. During cell infection, this complex mediates entry of the virion core into the host cytoplasm by a two-step mechanism consisting of lipid mixing of the viral and cellular membranes and subsequent pore formation. In Vaccinia virus (strain Copenhagen) (VACV), this protein is Entry-fusion complex protein OPG086 (OPG086).